The primary structure comprises 295 residues: Sperm acrosome membrane-associated protein 1 (295 aa).

The signal sequence occupies residues M1–G29. Residues I30–V220 lie on the Extracellular side of the membrane. Residues S39–S71 are disordered. Residues G44–Q68 show a composition bias toward acidic residues. Residue N72 is glycosylated (N-linked (GlcNAc...) asparagine). The chain crosses the membrane as a helical span at residues F221–I241. The Cytoplasmic segment spans residues V242–E295. A Phosphoserine modification is found at S256. A disordered region spans residues E263–E295. Y269 is modified (phosphotyrosine). Phosphoserine is present on residues S278 and S291.

In terms of assembly, interacts with CYLC1; the interaction may be relevant for proper acrosome attachment to the nuclear envelope. N-glycosylated. In terms of tissue distribution, detected in spermatozoa (at protein level).

It localises to the cytoplasmic vesicle. Its subcellular location is the secretory vesicle. The protein resides in the acrosome inner membrane. Plays a role in acrosome expansion and establishment of normal sperm morphology during spermatogenesis. Important for male fertility. This chain is Sperm acrosome membrane-associated protein 1, found in Sus scrofa (Pig).